Consider the following 295-residue polypeptide: Acetylglutamate kinase (295 aa).

Substrate is bound by residues 66–67, Arg88, and Asn193; that span reads GG.

This sequence belongs to the acetylglutamate kinase family. ArgB subfamily.

The protein resides in the cytoplasm. The enzyme catalyses N-acetyl-L-glutamate + ATP = N-acetyl-L-glutamyl 5-phosphate + ADP. It participates in amino-acid biosynthesis; L-arginine biosynthesis; N(2)-acetyl-L-ornithine from L-glutamate: step 2/4. In terms of biological role, catalyzes the ATP-dependent phosphorylation of N-acetyl-L-glutamate. The sequence is that of Acetylglutamate kinase from Sinorhizobium fredii (strain NBRC 101917 / NGR234).